A 335-amino-acid polypeptide reads, in one-letter code: ETS translocation variant 2 (335 aa).

2 disordered regions span residues 94–138 (DPWS…SWSH) and 201–220 (GHQS…SDRA). Residues 205–220 (PAFTTPSKSNKQSDRA) are compositionally biased toward polar residues. The ETS DNA-binding region spans 234–314 (IQLWQFLLEL…GGRKYTYRFG (81 aa)).

This sequence belongs to the ETS family. Testis.

The protein resides in the nucleus. Functionally, binds to DNA sequences containing the consensus pentanucleotide 5'-CGGA[AT]-3'. The chain is ETS translocation variant 2 (Etv2) from Mus musculus (Mouse).